The chain runs to 242 residues: Small ribosomal subunit protein uS2 (242 aa).

The protein belongs to the universal ribosomal protein uS2 family.

This is Small ribosomal subunit protein uS2 from Photobacterium profundum (strain SS9).